The primary structure comprises 149 residues: Large ribosomal subunit protein uL15 (149 aa).

Residues 1–64 (MVELHDLQPH…GQTPLYMRIP (64 aa)) form a disordered region. Residues 31–40 (TAGRGHKGQK) are compositionally biased toward basic residues.

Belongs to the universal ribosomal protein uL15 family. Part of the 50S ribosomal subunit.

In terms of biological role, binds to the 23S rRNA. This chain is Large ribosomal subunit protein uL15, found in Aquifex aeolicus (strain VF5).